The chain runs to 313 residues: MAEASPQPGRYFCHCCSVEIVPRLPDYICPRCESGFIEELPEETRSAENGSAPSTASADQSRQQPFENVDQPLFTLPQGYGHFAFGIFDDSFEIPTFPPGAQADDSRDPESRREREQHSRHRYGARQPRARLTARRATGRHEGVPTLEGIIQQLVNGIITPATIPNLGLGPWGVLHSNPMDYAWGANGLDAIITQLLNQFENTGPPPADKEKIQALPTVPVTEEHVGSGLECPVCKDDYGLGEHVRQLPCNHLFHDGCIVPWLEQHDSCPVCRKSLTGQNTATDPPGLAGVSFSSSSSSSSSSPGNENPASSS.

A2 carries the N-acetylalanine modification. S5 bears the Phosphoserine mark. The interval 5–101 (SPQPGRYFCH…FEIPTFPPGA (97 aa)) is required for interaction with BAG6. 4 residues coordinate Zn(2+): C13, C16, C29, and C32. Residues 13–32 (CHCCSVEIVPRLPDYICPRC) form a C4-type zinc finger. Disordered stretches follow at residues 42-64 (EETRSAENGSAPSTASADQSRQQ) and 96-128 (TFPPGAQADDSRDPESRREREQHSRHRYGARQP). Residues 47 to 64 (AENGSAPSTASADQSRQQ) are compositionally biased toward polar residues. Residues 104–117 (DDSRDPESRREREQ) show a composition bias toward basic and acidic residues. Residues 118–128 (HSRHRYGARQP) show a composition bias toward basic residues. A sufficient for interaction with AICDA region spans residues 203–306 (TGPPPADKEK…SSSSSSSPGN (104 aa)). An RING-type zinc finger spans residues 232–273 (CPVCKDDYGLGEHVRQLPCNHLFHDGCIVPWLEQHDSCPVCR). A disordered region spans residues 280 to 313 (NTATDPPGLAGVSFSSSSSSSSSSPGNENPASSS). The span at 292-313 (SFSSSSSSSSSSPGNENPASSS) shows a compositional bias: low complexity.

As to quaternary structure, interacts with CCDC50, EGFR, FLT3 and SCAMP3. Interacts with BAG6 (via ubiquitin-like domain); required for BAG6-dependent ubiquitination of proteins mislocalized to the cytosol. Interacts with CDKN1A. Interacts with AICDA. Post-translationally, ubiquitinated. May undergo autoubiquitination.

The protein resides in the cytoplasm. It is found in the nucleus. It carries out the reaction S-ubiquitinyl-[E2 ubiquitin-conjugating enzyme]-L-cysteine + [acceptor protein]-L-lysine = [E2 ubiquitin-conjugating enzyme]-L-cysteine + N(6)-ubiquitinyl-[acceptor protein]-L-lysine.. It functions in the pathway protein modification; protein ubiquitination. Functionally, E3 ubiquitin-protein ligase that mediates ubiquitination oF target proteins. Depending on the associated E2 ligase, mediates 'Lys-27'-, 'Lys-29'-, 'Lys-48'- and/or 'Lys-63'-linked polyubiquitination of substrates. Part of a BAG6-dependent quality control process ensuring that proteins of the secretory pathway that are mislocalized to the cytosol are degraded by the proteasome. Probably acts by providing the ubiquitin ligase activity associated with the BAG6 complex and be responsible for ubiquitination of the hydrophobic mislocalized proteins and their targeting to the proteasome. May also play a role in the endosomal recycling of IGF2R, the cation-independent mannose-6-phosphate receptor. May play a role in the endosomal sorting and degradation of several membrane receptors including EGFR, FLT3, MET and CXCR4, by mediating their ubiquitination. By ubiquitinating CDKN1A/p21 and targeting it for degradation, may also promote cell proliferation. May monoubiquitinate AICDA. Acts as a regulator of DNA repair by mediating 'Lys-27'- and 'Lys-29'-linked polyubiquitination of MRE11, thereby promoting the exonuclease activity of MRE11. The sequence is that of E3 ubiquitin-protein ligase RNF126 from Bos taurus (Bovine).